The chain runs to 178 residues: Large ribosomal subunit protein bL25 (178 aa).

This sequence belongs to the bacterial ribosomal protein bL25 family. CTC subfamily. As to quaternary structure, part of the 50S ribosomal subunit; part of the 5S rRNA/L5/L18/L25 subcomplex. Contacts the 5S rRNA. Binds to the 5S rRNA independently of L5 and L18.

In terms of biological role, this is one of the proteins that binds to the 5S RNA in the ribosome where it forms part of the central protuberance. This is Large ribosomal subunit protein bL25 from Helicobacter pylori (strain J99 / ATCC 700824) (Campylobacter pylori J99).